A 470-amino-acid polypeptide reads, in one-letter code: Pyoverdine export outer membrane protein OpmQ (470 aa).

Residues 1-18 (MTLPRHLCLLPLSLSLLA) form the signal peptide. Cys-19 carries N-palmitoyl cysteine lipidation. Cys-19 carries S-diacylglycerol cysteine lipidation.

The protein belongs to the outer membrane factor (OMF) (TC 1.B.17) family. As to quaternary structure, part of the tripartite efflux system PvdRT-OpmQ, which is composed of an inner membrane component with both ATPase and permease domains, PvdT, a periplasmic membrane fusion protein, PvdR, and an outer membrane component, OpmQ.

The protein localises to the cell outer membrane. Functionally, part of the tripartite efflux system PvdRT-OpmQ required for the secretion into the extracellular milieu of the siderophore pyoverdine (PVD), which is involved in iron acquisition. The system is responsible for export of newly synthesized PVD after the final steps of biosynthesis have taken place in the periplasm. It is also responsible for recycling of PVD after internalization of ferri-PVD into the periplasm by the outer-membrane receptor FpvA and release of iron from PVD, thus making PVD available for new cycles of iron uptake. Contributes to resistance against ampicillin. In Pseudomonas putida (strain ATCC 47054 / DSM 6125 / CFBP 8728 / NCIMB 11950 / KT2440), this protein is Pyoverdine export outer membrane protein OpmQ.